Here is a 350-residue protein sequence, read N- to C-terminus: Pleckstrin (350 aa).

A PH 1 domain is found at 4-101 (KRIREGYLVK…WVRDIKKAIK (98 aa)). The residue at position 64 (lysine 64) is an N6-acetyllysine. 2 positions are modified to phosphoserine: serine 113 and serine 117. One can recognise a DEP domain in the interval 136-221 (PEKGIKELNL…SPDAFYYFPD (86 aa)). The PH 2 domain occupies 244–347 (VIIKQGCLLK…WIKAIQVASR (104 aa)).

Its function is as follows. Major protein kinase C substrate of platelets. The chain is Pleckstrin (Plek) from Mus musculus (Mouse).